Reading from the N-terminus, the 225-residue chain is T4 protein (225 aa).

Belongs to the poxviruses B9 family.

The polypeptide is T4 protein (Rabbit fibroma virus (strain Kasza) (RFV)).